A 391-amino-acid chain; its full sequence is Casein kinase II subunit alpha 3 (391 aa).

The Protein kinase domain maps to 39–324 (YQLVRKLGRG…AREAMEHPYF (286 aa)). ATP-binding positions include 45–53 (LGRGKYSEV) and Lys68. The Proton acceptor role is filled by Asp156.

This sequence belongs to the protein kinase superfamily. Ser/Thr protein kinase family. CK2 subfamily. Heterotetramer composed of two catalytic subunits (alpha chain and/or alpha' chain) and two regulatory subunits (beta chains). Interacts with PML. Detected in blood platelets and megakaryocyte cell lines. Poorly expressed in lung. Highly expressed in lung tumor tissues.

It catalyses the reaction L-seryl-[protein] + ATP = O-phospho-L-seryl-[protein] + ADP + H(+). It carries out the reaction L-threonyl-[protein] + ATP = O-phospho-L-threonyl-[protein] + ADP + H(+). In terms of biological role, probable catalytic subunit of a constitutively active serine/threonine-protein kinase complex that phosphorylates a large number of substrates containing acidic residues C-terminal to the phosphorylated serine or threonine. Amplification-dependent oncogene; promotes cell proliferation and tumorigenesis by down-regulating expression of the tumor suppressor protein, PML. May play a role in the pathogenesis of the lung cancer development and progression. This chain is Casein kinase II subunit alpha 3 (CSNK2A3), found in Homo sapiens (Human).